A 238-amino-acid polypeptide reads, in one-letter code: ATP synthase subunit a (238 aa).

Helical transmembrane passes span 15–35 (IFNL…FVFI), 76–96 (YSLF…LGLM), 111–131 (PTAN…LTHI), 167–187 (LALR…LLLL), and 208–230 (AFSV…VYLG).

This sequence belongs to the ATPase A chain family. F-type ATPases have 2 components, CF(1) - the catalytic core - and CF(0) - the membrane proton channel. CF(1) has five subunits: alpha(3), beta(3), gamma(1), delta(1), epsilon(1). CF(0) has three main subunits: a(1), b(2) and c(9-12). The alpha and beta chains form an alternating ring which encloses part of the gamma chain. CF(1) is attached to CF(0) by a central stalk formed by the gamma and epsilon chains, while a peripheral stalk is formed by the delta and b chains.

The protein resides in the cell membrane. In terms of biological role, key component of the proton channel; it plays a direct role in the translocation of protons across the membrane. This is ATP synthase subunit a from Streptococcus pneumoniae serotype 19F (strain G54).